Here is a 369-residue protein sequence, read N- to C-terminus: Nudix hydrolase 8 (369 aa).

The region spanning 188–318 (SHQVGVGGFV…GDKMFKRVIE (131 aa)) is the Nudix hydrolase domain. The Nudix box signature appears at 225–246 (GFINESEEIFSGAVREVKEETG). 2 residues coordinate Mg(2+): Glu-240 and Glu-244.

Belongs to the Nudix hydrolase family. Mg(2+) serves as cofactor. The cofactor is Mn(2+). Expressed in roots, stems and, at lower level, leaves.

Probably mediates the hydrolysis of some nucleoside diphosphate derivatives. May be involved in plant immunity and act as a positive regulator of defense response through salicylic acid (SA) signaling. The polypeptide is Nudix hydrolase 8 (NUDT8) (Arabidopsis thaliana (Mouse-ear cress)).